The chain runs to 219 residues: Proteasome subunit beta type-9 (219 aa).

Residues 1 to 20 (MLQAGAPTAGSFRTGEVHTG) constitute a propeptide, removed in mature form. Thr21 acts as the Nucleophile in catalysis. An N6-acetyllysine mark is found at Lys53 and Lys109.

This sequence belongs to the peptidase T1B family. In terms of assembly, the 26S proteasome consists of a 20S proteasome core and two 19S regulatory subunits. The 20S proteasome core is composed of 28 subunits that are arranged in four stacked rings, resulting in a barrel-shaped structure. The two end rings are each formed by seven alpha subunits, and the two central rings are each formed by seven beta subunits. The catalytic chamber with the active sites is on the inside of the barrel. Component of the immunoproteasome, where it displaces the equivalent housekeeping subunit PSMB6. Component of the spermatoproteasome, a form of the proteasome specifically found in testis. Interacts with NCOA2 and NCOA3. Autocleaved. The resulting N-terminal Thr residue of the mature subunit is responsible for the nucleophile proteolytic activity. Detected in the cytoplasmic lobe of elongated spermatids, in residual bodies, and in the acrosomal cap of round spermatids.

It localises to the cytoplasm. The protein localises to the nucleus. The enzyme catalyses Cleavage of peptide bonds with very broad specificity.. The proteasome is a multicatalytic proteinase complex which is characterized by its ability to cleave peptides with Arg, Phe, Tyr, Leu, and Glu adjacent to the leaving group at neutral or slightly basic pH. The proteasome has an ATP-dependent proteolytic activity. This subunit is involved in antigen processing to generate class I binding peptides. The sequence is that of Proteasome subunit beta type-9 (Psmb9) from Rattus norvegicus (Rat).